Here is a 459-residue protein sequence, read N- to C-terminus: Transcription factor 7-like 2 (459 aa).

Residues 1–11 show a composition bias toward gly residues; sequence MPQLNGGGGDD. Positions 1–53 are CTNNB1-binding; the sequence is MPQLNGGGGDDLGANDELISFKDEGEQEEKNSENSSAERDLADVKSSLVNESE. A disordered region spans residues 1–96; sequence MPQLNGGGGD…AKRQDGGLFK (96 aa). Over residues 19–43 the composition is skewed to basic and acidic residues; sequence ISFKDEGEQEEKNSENSSAERDLAD. Lys22 is covalently cross-linked (Glycyl lysine isopeptide (Lys-Gly) (interchain with G-Cter in SUMO2)). Positions 47-56 are enriched in polar residues; the sequence is SLVNESETNQ. Residues 63 to 91 show a composition bias toward basic and acidic residues; it reads EAERRPPPRSESFRDKSRESLEEAAKRQD. A phosphothreonine; by NLK mark is found at Thr178 and Thr189. The tract at residues 178-372 is mediates interaction with MAD2L2; sequence TPLITYSNEH…RRWHALSREE (195 aa). Polar residues predominate over residues 295-305; sequence TVKQESSQSDV. Disordered stretches follow at residues 295–327 and 397–418; these read TVKQ…KPHI and RDNY…TNEH. A Glycyl lysine isopeptide (Lys-Gly) (interchain with G-Cter in SUMO) cross-link involves residue Lys297. Basic and acidic residues predominate over residues 312-323; that stretch reads KHQDSKKEEEKK. The HMG box DNA-binding region spans 327-395; that stretch reads IKKPLNAFML…LHMQLYPGWS (69 aa). A Nuclear localization signal motif is present at residues 402-408; the sequence is KKKKRKR.

The protein belongs to the TCF/LEF family. As to quaternary structure, interacts with TGFB1I1. Interacts with SPIN1. Interacts with CTNNB1 (via the armadillo repeat); forms stable transcription complex. Interacts with EP300. Interacts with NLK. Interacts with CCDC85B (probably through the HMG box); prevents interaction with CTNNB1. Interacts with TNIK. Interacts with MAD2L2; prevents TCF7L2/TCF4 binding to promZIPK/DAPK3oters, negatively modulating its transcriptional activity. Interacts with ZIPK/DAPK3. Interacts with XIAP/BIRC4 and TLE3. Interacts with DDIT3/CHOP. The CTNNB1 and TCF7L2/TCF4 complex interacts with PML (isoform PML-4). Identified in a complex with CTNNB1 and FERMT2. Interacts with C11orf84/SPINDOC in a SPIN1-dependent manner. Interacts with DAZAP2; the interaction results in localization of DAZAP2 to the nucleus. Phosphorylated at Thr-178 and/or Thr-189 by NLK. Phosphorylation by NLK at these sites inhibits DNA-binding by TCF7L2/TCF4, thereby preventing transcriptional activation of target genes of the canonical Wnt/beta-catenin signaling pathway. Post-translationally, polysumoylated. Sumoylation is enhanced by PIAS family members and desumoylation is enhanced by SENP2. Sumoylation/desumoylation regulates TCF7L2/TCF4 transcription activity in the Wnt/beta-catenin signaling pathway without altering interaction with CTNNB1 nor binding to DNA. In terms of tissue distribution, detected in adult brain and liver, and at lower levels in intestine, with a clear increase from the distal colon to the duodenum. Detected at low levels in heart, lung, kidney, pituitary and testis.

It localises to the nucleus. Its subcellular location is the PML body. Functionally, participates in the Wnt signaling pathway and modulates MYC expression by binding to its promoter in a sequence-specific manner. Acts as a repressor in the absence of CTNNB1, and as activator in its presence. Activates transcription from promoters with several copies of the Tcf motif CCTTTGATC in the presence of CTNNB1. TLE1, TLE2, TLE3 and TLE4 repress transactivation mediated by TCF7L2/TCF4 and CTNNB1. Expression of dominant-negative mutants results in cell-cycle arrest in G1. Necessary for the maintenance of the epithelial stem-cell compartment of the small intestine. In Mus musculus (Mouse), this protein is Transcription factor 7-like 2 (Tcf7l2).